A 666-amino-acid polypeptide reads, in one-letter code: UvrABC system protein B (666 aa).

One can recognise a Helicase ATP-binding domain in the interval 26 to 183 (DSFQKGAEKV…RKLLHIQYNR (158 aa)). Residue 39-46 (GVTGSGKT) participates in ATP binding. A Beta-hairpin motif is present at residues 92 to 115 (YYDYYQPEAYVPSSDTFIEKDSSI). The 163-residue stretch at 429–591 (QIEDLLVEIR…ITPLTIRKEV (163 aa)) folds into the Helicase C-terminal domain. In terms of domain architecture, UVR spans 625–660 (EVLKDKLREEMMKAAKELDFERAAILRDKMLSIQIN).

This sequence belongs to the UvrB family. Forms a heterotetramer with UvrA during the search for lesions. Interacts with UvrC in an incision complex.

It localises to the cytoplasm. Its function is as follows. The UvrABC repair system catalyzes the recognition and processing of DNA lesions. A damage recognition complex composed of 2 UvrA and 2 UvrB subunits scans DNA for abnormalities. Upon binding of the UvrA(2)B(2) complex to a putative damaged site, the DNA wraps around one UvrB monomer. DNA wrap is dependent on ATP binding by UvrB and probably causes local melting of the DNA helix, facilitating insertion of UvrB beta-hairpin between the DNA strands. Then UvrB probes one DNA strand for the presence of a lesion. If a lesion is found the UvrA subunits dissociate and the UvrB-DNA preincision complex is formed. This complex is subsequently bound by UvrC and the second UvrB is released. If no lesion is found, the DNA wraps around the other UvrB subunit that will check the other stand for damage. The protein is UvrABC system protein B of Leptospira borgpetersenii serovar Hardjo-bovis (strain JB197).